A 405-amino-acid polypeptide reads, in one-letter code: tRNA-specific 2-thiouridylase MnmA (405 aa).

ATP contacts are provided by residues 41-48 (AMSGGVDS) and L67. C135 serves as the catalytic Nucleophile. Residues C135 and C231 are joined by a disulfide bond. G159 contributes to the ATP binding site. Residues 181–183 (KDQ) are interaction with tRNA. Catalysis depends on C231, which acts as the Cysteine persulfide intermediate.

This sequence belongs to the MnmA/TRMU family.

It is found in the cytoplasm. It catalyses the reaction S-sulfanyl-L-cysteinyl-[protein] + uridine(34) in tRNA + AH2 + ATP = 2-thiouridine(34) in tRNA + L-cysteinyl-[protein] + A + AMP + diphosphate + H(+). In terms of biological role, catalyzes the 2-thiolation of uridine at the wobble position (U34) of tRNA, leading to the formation of s(2)U34. The protein is tRNA-specific 2-thiouridylase MnmA of Maricaulis maris (strain MCS10) (Caulobacter maris).